Here is a 238-residue protein sequence, read N- to C-terminus: Protein G1-like8 (238 aa).

2 disordered regions span residues 1–33 (MEGG…RYES) and 147–238 (KARG…ATRV). Residues 10-27 (GQAQPVAQAPPAMQPMQQ) are compositionally biased toward low complexity. Residues 30–157 (RYESQKRRDW…ARGIPYEKKK (128 aa)) enclose the ALOG domain. Residues 155–159 (KKKRK) carry the Nuclear localization signal motif. The span at 165–176 (QPPPPPPPPPQH) shows a compositional bias: pro residues. 2 stretches are compositionally biased toward low complexity: residues 177–213 (QPGA…ATSQ) and 222–238 (TTTT…ATRV).

This sequence belongs to the plant homeotic and developmental regulators ALOG protein family.

Its subcellular location is the nucleus. Its function is as follows. Probable transcription regulator that acts as a developmental regulator by promoting cell growth in response to light. The protein is Protein G1-like8 (G1L8) of Oryza sativa subsp. japonica (Rice).